The primary structure comprises 195 residues: Probable GTP-binding protein EngB (195 aa).

The EngB-type G domain occupies 24 to 195 (GLKEVALAGR…MIFNAIEKYL (172 aa)). GTP-binding positions include 32 to 39 (GRSNVGKS), 59 to 63 (GKTQT), 77 to 80 (DVPG), 144 to 147 (TKED), and 176 to 178 (YTA). Positions 39 and 61 each coordinate Mg(2+).

The protein belongs to the TRAFAC class TrmE-Era-EngA-EngB-Septin-like GTPase superfamily. EngB GTPase family. Requires Mg(2+) as cofactor.

Necessary for normal cell division and for the maintenance of normal septation. In Macrococcus caseolyticus (strain JCSC5402) (Macrococcoides caseolyticum), this protein is Probable GTP-binding protein EngB.